We begin with the raw amino-acid sequence, 185 residues long: Large ribosomal subunit protein uL5 (185 aa).

It belongs to the universal ribosomal protein uL5 family. In terms of assembly, part of the 50S ribosomal subunit; part of the 5S rRNA/L5/L18/L25 subcomplex. Contacts the 5S rRNA and the P site tRNA. Forms a bridge to the 30S subunit in the 70S ribosome.

This is one of the proteins that bind and probably mediate the attachment of the 5S RNA into the large ribosomal subunit, where it forms part of the central protuberance. In the 70S ribosome it contacts protein S13 of the 30S subunit (bridge B1b), connecting the 2 subunits; this bridge is implicated in subunit movement. Contacts the P site tRNA; the 5S rRNA and some of its associated proteins might help stabilize positioning of ribosome-bound tRNAs. This is Large ribosomal subunit protein uL5 from Nitrobacter hamburgensis (strain DSM 10229 / NCIMB 13809 / X14).